A 107-amino-acid polypeptide reads, in one-letter code: MEPYAVVQTGNKQYQVRKGDVIDVELLDGISEENKEVLFQEVLFVFDGEKASVGSPTVGNAVVKGELISFVRGEKVVAYKYKKRKNYHKKIGHRQNYLRVKICDLVM.

It belongs to the bacterial ribosomal protein bL21 family. As to quaternary structure, part of the 50S ribosomal subunit. Contacts protein L20.

In terms of biological role, this protein binds to 23S rRNA in the presence of protein L20. This chain is Large ribosomal subunit protein bL21, found in Chlamydia muridarum (strain MoPn / Nigg).